Here is a 394-residue protein sequence, read N- to C-terminus: Chorismate synthase (394 aa).

NADP(+) contacts are provided by R42 and R48. FMN is bound by residues 137–139, 258–259, G302, 317–321, and R343; these read RAS, QA, and KPIAT.

This sequence belongs to the chorismate synthase family. As to quaternary structure, homotetramer. The cofactor is FMNH2.

It carries out the reaction 5-O-(1-carboxyvinyl)-3-phosphoshikimate = chorismate + phosphate. The protein operates within metabolic intermediate biosynthesis; chorismate biosynthesis; chorismate from D-erythrose 4-phosphate and phosphoenolpyruvate: step 7/7. In terms of biological role, catalyzes the anti-1,4-elimination of the C-3 phosphate and the C-6 proR hydrogen from 5-enolpyruvylshikimate-3-phosphate (EPSP) to yield chorismate, which is the branch point compound that serves as the starting substrate for the three terminal pathways of aromatic amino acid biosynthesis. This reaction introduces a second double bond into the aromatic ring system. This chain is Chorismate synthase, found in Streptomyces coelicolor (strain ATCC BAA-471 / A3(2) / M145).